Consider the following 216-residue polypeptide: Thymidine kinase (216 aa).

Residues 9 to 16 (GTMDCGKS) and 86 to 89 (DEAQ) contribute to the ATP site. E87 acts as the Proton acceptor in catalysis.

The protein belongs to the thymidine kinase family. As to quaternary structure, homotetramer.

It localises to the cytoplasm. It carries out the reaction thymidine + ATP = dTMP + ADP + H(+). This Streptomyces coelicolor (strain ATCC BAA-471 / A3(2) / M145) protein is Thymidine kinase.